The sequence spans 582 residues: Pineapple eye protein (582 aa).

Residues glutamate 6–leucine 44 form a C2HC pre-PHD-type zinc finger. An extended PHD domain (ePHD) region spans residues glutamate 6–arginine 119. The PHD-type; atypical zinc-finger motif lies at arginine 72 to arginine 119. Disordered stretches follow at residues proline 292–phenylalanine 311 and arginine 323–isoleucine 422. Polar residues predominate over residues serine 340–proline 363. Basic and acidic residues predominate over residues serine 383 to serine 399.

Required for survival of imaginal disk cells possibly by regulation of cell apoptosis. Required for germline stem cell self-renewal through mediation of BMP signaling. The polypeptide is Pineapple eye protein (Drosophila melanogaster (Fruit fly)).